Consider the following 422-residue polypeptide: Protein FAM53B (422 aa).

6 positions are modified to phosphoserine: S118, S167, S169, S179, S212, and S268. A compositionally biased stretch (low complexity) spans 245 to 268; the sequence is SANSTPASTPELARRSSGLSRSRS. The segment at 245–269 is disordered; it reads SANSTPASTPELARRSSGLSRSRSQ. Residues 281 to 284 carry the Nuclear localization signal motif; the sequence is KRRR.

It belongs to the FAM53 family. In terms of assembly, interacts with CTNNB1. In terms of tissue distribution, detected in skeletal muscle, kidney, spleen, thyroid, testis, ovary, small intestine, colon and peripheral blood.

Its subcellular location is the nucleus. Its function is as follows. Acts as a regulator of Wnt signaling pathway by regulating beta-catenin (CTNNB1) nuclear localization. In Homo sapiens (Human), this protein is Protein FAM53B.